Here is a 320-residue protein sequence, read N- to C-terminus: GTP 3',8-cyclase (320 aa).

Positions 5–225 constitute a Radical SAM core domain; the sequence is QFGRKINYLR…IQLIKKDEKA (221 aa). Residue arginine 14 coordinates GTP. Residues cysteine 21 and cysteine 25 each contribute to the [4Fe-4S] cluster site. Tyrosine 27 provides a ligand contact to S-adenosyl-L-methionine. Position 28 (cysteine 28) interacts with [4Fe-4S] cluster. Position 64 (arginine 64) interacts with GTP. Glycine 68 contacts S-adenosyl-L-methionine. Threonine 95 contacts GTP. Serine 119 contacts S-adenosyl-L-methionine. A GTP-binding site is contributed by lysine 155. Methionine 189 serves as a coordination point for S-adenosyl-L-methionine. 2 residues coordinate [4Fe-4S] cluster: cysteine 248 and cysteine 251. 253 to 255 lines the GTP pocket; sequence RIR. Position 265 (cysteine 265) interacts with [4Fe-4S] cluster.

The protein belongs to the radical SAM superfamily. MoaA family. As to quaternary structure, monomer and homodimer. The cofactor is [4Fe-4S] cluster.

It carries out the reaction GTP + AH2 + S-adenosyl-L-methionine = (8S)-3',8-cyclo-7,8-dihydroguanosine 5'-triphosphate + 5'-deoxyadenosine + L-methionine + A + H(+). It functions in the pathway cofactor biosynthesis; molybdopterin biosynthesis. Its function is as follows. Catalyzes the cyclization of GTP to (8S)-3',8-cyclo-7,8-dihydroguanosine 5'-triphosphate. The chain is GTP 3',8-cyclase from Campylobacter jejuni subsp. jejuni serotype O:6 (strain 81116 / NCTC 11828).